A 347-amino-acid polypeptide reads, in one-letter code: Anthranilate phosphoribosyltransferase (347 aa).

5-phospho-alpha-D-ribose 1-diphosphate is bound by residues Gly-88, 91–92 (GD), Thr-96, 98–101 (NIST), 116–124 (KHGNRSVSS), and Ser-128. Anthranilate is bound at residue Gly-88. Residue Ser-100 coordinates Mg(2+). Position 119 (Asn-119) interacts with anthranilate. Arg-174 is an anthranilate binding site. Residues Asp-232 and Glu-233 each coordinate Mg(2+).

This sequence belongs to the anthranilate phosphoribosyltransferase family. Homodimer. Mg(2+) serves as cofactor.

The enzyme catalyses N-(5-phospho-beta-D-ribosyl)anthranilate + diphosphate = 5-phospho-alpha-D-ribose 1-diphosphate + anthranilate. It functions in the pathway amino-acid biosynthesis; L-tryptophan biosynthesis; L-tryptophan from chorismate: step 2/5. Functionally, catalyzes the transfer of the phosphoribosyl group of 5-phosphorylribose-1-pyrophosphate (PRPP) to anthranilate to yield N-(5'-phosphoribosyl)-anthranilate (PRA). This is Anthranilate phosphoribosyltransferase from Shewanella sp. (strain ANA-3).